Consider the following 312-residue polypeptide: Cathepsin O (312 aa).

Positions Met-1–Gly-23 are cleaved as a signal peptide. Positions Thr-24–Ser-98 are cleaved as a propeptide — activation peptide. Asn-53 and Asn-96 each carry an N-linked (GlcNAc...) asparagine glycan. Cystine bridges form between Cys-120–Cys-161, Cys-154–Cys-195, and Cys-253–Cys-301. Residue Cys-123 is part of the active site. Active-site residues include His-260 and Asn-280.

This sequence belongs to the peptidase C1 family.

It is found in the lysosome. The catalysed reaction is The recombinant human enzyme hydrolyzes synthetic endopeptidase substrates including Z-Phe-Arg-NHMec and Z-Arg-Arg-NHMec.. Functionally, proteolytic enzyme possibly involved in normal cellular protein degradation and turnover. The protein is Cathepsin O (Ctso) of Mus musculus (Mouse).